The chain runs to 819 residues: Solute carrier organic anion transporter family member 74D (819 aa).

The segment at 1–157 is disordered; it reads MTKSNGDVEA…GSSAESSSSC (157 aa). Residues 1–174 are Cytoplasmic-facing; the sequence is MTKSNGDVEA…RWARRFASTH (174 aa). 3 stretches are compositionally biased toward polar residues: residues 24–34, 43–62, and 71–81; these read GHGQLNGNGYH, SQAF…NGEV, and LYESTPSNNNE. 2 stretches are compositionally biased toward low complexity: residues 91 to 111 and 144 to 157; these read LKNG…NGHS and DLNG…SSSC. The helical transmembrane segment at 175–195 threads the bilayer; the sequence is VFMVVFLLAYILQGMYMTYFV. At 196-213 the chain is on the extracellular side; the sequence is SVITTIEKLFQIKSKTTG. Residues 214 to 234 traverse the membrane as a helical segment; the sequence is ILLSASEMGQICTAMLLTYFA. Over 235 to 242 the chain is Cytoplasmic; it reads GRGHRPRW. The chain crosses the membrane as a helical span at residues 243–263; the sequence is IACGMVLFSIAAFSCALPHFI. The Extracellular portion of the chain corresponds to 264–332; sequence FGEQLMHSSV…LEQASHSKIT (69 aa). Asn284, Asn293, and Asn309 each carry an N-linked (GlcNAc...) asparagine glycan. Residues 333 to 353 form a helical membrane-spanning segment; the sequence is VIVLCIFFGSLLSSGIGQTAV. At 354-373 the chain is on the cytoplasmic side; the sequence is ATLGIPYIDDNVGSKQSPMY. A helical transmembrane segment spans residues 374-394; it reads MAVTIGMRILGPASGFIFGSF. The Extracellular segment spans residues 395–413; sequence CTRWYVNFSNPGFDATDPR. Asn401 is a glycosylation site (N-linked (GlcNAc...) asparagine). The chain crosses the membrane as a helical span at residues 414–434; it reads WIGAWWLGPVAIGSLMLLASI. Over 435-488 the chain is Cytoplasmic; sequence AMFSFPKQLRGKQKPPGQTATPAAPVEPEEKPKLKDFPKTVRRQLSNDILMFRT. The disordered stretch occupies residues 444–466; sequence RGKQKPPGQTATPAAPVEPEEKP. A helical membrane pass occupies residues 489–509; it reads ASCVFHLLPIAGLYTFLPKYL. Over 510 to 522 the chain is Extracellular; that stretch reads ETQFRLATYDANM. The chain crosses the membrane as a helical span at residues 523-543; that stretch reads IAAFCGILVMGIGIVISGLFI. The Cytoplasmic segment spans residues 544-553; that stretch reads LKRKPTARGV. The chain crosses the membrane as a helical span at residues 554-574; the sequence is AAWIAFTALVYSAGMIILMFI. Over 575–667 the chain is Extracellular; the sequence is GCSMNDFAGY…NGYCDNNCKN (93 aa). The Kazal-like domain maps to 593 to 651; that stretch reads ALIEPTCSAALNCTCDKENFAPICADGKMYISACHAGCSSSSLRPSDNRTLYSDCACIP. 3 disulfide bridges follow: Cys599-Cys630, Cys607-Cys626, and Cys616-Cys649. Asn604 carries an N-linked (GlcNAc...) asparagine glycan. An N-linked (GlcNAc...) asparagine glycan is attached at Asn640. A helical membrane pass occupies residues 668–688; that stretch reads FIYFILIFAICVFMHSTSEVG. The Cytoplasmic segment spans residues 689-707; sequence SMLLVMRCTHPKDKAMAMG. Residues 708-728 traverse the membrane as a helical segment; sequence VIQSAIGLFGNVPCPIIYGAV. Over 729-756 the chain is Extracellular; that stretch reads VDSACLIWKSVCGKHGACSLYDADTFRQ. Residues 757–777 traverse the membrane as a helical segment; that stretch reads YFLGITAGIMFLAFLMDLVVW. The Cytoplasmic portion of the chain corresponds to 778–819; it reads RKAHRIDIAPEDPQEGGPASNGRTLEVSESKQPITPAPDTTV. The interval 787-819 is disordered; it reads PEDPQEGGPASNGRTLEVSESKQPITPAPDTTV. Positions 807-819 are enriched in polar residues; it reads SKQPITPAPDTTV.

This sequence belongs to the organo anion transporter (TC 2.A.60) family.

It is found in the cell membrane. In terms of biological role, transporter that mediates the cellular uptake of ecdysteroids, including ecdysone, from the hemolymph. The chain is Solute carrier organic anion transporter family member 74D from Drosophila melanogaster (Fruit fly).